The primary structure comprises 730 residues: Semaphorin-1A (730 aa).

The signal sequence occupies residues 1-20 (MRAALVAVAALLWVALHAAA). The Extracellular segment spans residues 21–630 (WVNDVSPKMY…LPIYTAETLT (610 aa)). The region spanning 28–490 (KMYVQFGEER…SDDEILAIKL (463 aa)) is the Sema domain. Residues Asn44 and Asn71 are each glycosylated (N-linked (GlcNAc...) asparagine). 2 disulfides stabilise this stretch: Cys97–Cys107 and Cys125–Cys134. N-linked (GlcNAc...) asparagine glycans are attached at residues Asn163 and Asn267. 2 disulfide bridges follow: Cys244-Cys358 and Cys268-Cys317. N-linked (GlcNAc...) asparagine glycosylation is present at Asn360. 2 disulfides stabilise this stretch: Cys493-Cys512 and Cys504-Cys521. A glycan (N-linked (GlcNAc...) asparagine) is linked at Asn539. The chain crosses the membrane as a helical span at residues 631-651 (IAIVTSCLGALVVGFISGFLF). Topologically, residues 652–730 (SRRCRGEDYT…PIQKVKKTYI (79 aa)) are cytoplasmic. A compositionally biased stretch (low complexity) spans 708-720 (ANGKNANSSAENK). The tract at residues 708-730 (ANGKNANSSAENKPIQKVKKTYI) is disordered.

This sequence belongs to the semaphorin family. Dynamically expressed on a subset of axon pathways in the developing CNS and on circumferential bands of epithelial cells in developing limb buds.

It localises to the membrane. Its function is as follows. Plays a role in growth cones guidance. The chain is Semaphorin-1A (SEMA-1A) from Schistocerca americana (American grasshopper).